We begin with the raw amino-acid sequence, 202 residues long: Small ribosomal subunit protein uS4c (202 aa).

One can recognise an S4 RNA-binding domain in the interval 90–153 (MRLDNVIFRL…KSETIISKNI (64 aa)).

The protein belongs to the universal ribosomal protein uS4 family. As to quaternary structure, part of the 30S ribosomal subunit. Contacts protein S5. The interaction surface between S4 and S5 is involved in control of translational fidelity.

The protein resides in the plastid. It is found in the chloroplast. Functionally, one of the primary rRNA binding proteins, it binds directly to 16S rRNA where it nucleates assembly of the body of the 30S subunit. With S5 and S12 plays an important role in translational accuracy. The protein is Small ribosomal subunit protein uS4c (rps4) of Arbusculohypopterygium arbuscula (Moss).